A 308-amino-acid polypeptide reads, in one-letter code: Carbamate kinase (308 aa).

This sequence belongs to the carbamate kinase family.

It is found in the cytoplasm. It catalyses the reaction hydrogencarbonate + NH4(+) + ATP = carbamoyl phosphate + ADP + H2O + H(+). The polypeptide is Carbamate kinase (Synechocystis sp. (strain ATCC 27184 / PCC 6803 / Kazusa)).